Consider the following 94-residue polypeptide: Large ribosomal subunit protein eL43B (94 aa).

Residues 39–62 form a C4-type zinc finger; that stretch reads CPFCGRLTVKRTAAGIWKCSGKGC.

Belongs to the eukaryotic ribosomal protein eL43 family. In terms of assembly, component of the large ribosomal subunit (LSU). Mature yeast ribosomes consist of a small (40S) and a large (60S) subunit. The 40S small subunit contains 1 molecule of ribosomal RNA (18S rRNA) and at least 33 different proteins. The large 60S subunit contains 3 rRNA molecules (25S, 5.8S and 5S rRNA) and at least 46 different proteins.

The protein localises to the cytoplasm. Its function is as follows. Component of the ribosome, a large ribonucleoprotein complex responsible for the synthesis of proteins in the cell. The small ribosomal subunit (SSU) binds messenger RNAs (mRNAs) and translates the encoded message by selecting cognate aminoacyl-transfer RNA (tRNA) molecules. The large subunit (LSU) contains the ribosomal catalytic site termed the peptidyl transferase center (PTC), which catalyzes the formation of peptide bonds, thereby polymerizing the amino acids delivered by tRNAs into a polypeptide chain. The nascent polypeptides leave the ribosome through a tunnel in the LSU and interact with protein factors that function in enzymatic processing, targeting, and the membrane insertion of nascent chains at the exit of the ribosomal tunnel. This Schizosaccharomyces pombe (strain 972 / ATCC 24843) (Fission yeast) protein is Large ribosomal subunit protein eL43B (rpl4302).